A 492-amino-acid polypeptide reads, in one-letter code: uncharacterized protein (492 aa).

The next 12 helical transmembrane spans lie at 16–36 (FIAF…VMTM), 39–59 (VGPF…GVVL), 107–127 (SFNG…IPVV), 133–153 (IIIG…FISL), 162–182 (AIFY…ILGI), 210–230 (IIFI…LASI), 243–263 (FLIA…IISG), 291–311 (LVGG…NSLA), 350–370 (VLIS…IPFL), 394–414 (MAAA…FMIF), 429–449 (VSYV…LFPF), and 454–474 (VFNT…VGFF).

To M.genitalium MG225.

The protein localises to the cell membrane. This is an uncharacterized protein from Mycoplasma genitalium (strain ATCC 33530 / DSM 19775 / NCTC 10195 / G37) (Mycoplasmoides genitalium).